The following is an 806-amino-acid chain: Acetyl-CoA decarbonylase/synthase complex subunit alpha 1 (806 aa).

Residues cysteine 73, cysteine 76, cysteine 77, cysteine 79, cysteine 84, and cysteine 94 each coordinate [4Fe-4S] cluster. Histidine 117 provides a ligand contact to CO. [Ni-4Fe-4S] cluster is bound by residues histidine 250, cysteine 278, and cysteine 323. 2 consecutive 4Fe-4S ferredoxin-type domains span residues 407–436 (DEEF…IPEA) and 446–475 (SYLE…LNII). Residues cysteine 417, cysteine 420, cysteine 423, cysteine 427, cysteine 455, cysteine 458, cysteine 461, and cysteine 465 each coordinate [4Fe-4S] cluster. Positions 523, 552, and 587 each coordinate [Ni-4Fe-4S] cluster.

It belongs to the Ni-containing carbon monoxide dehydrogenase family. Heterotetramer of two alpha and two epsilon subunits. The ACDS complex is made up of alpha, epsilon, beta, gamma and delta subunits with a probable stoichiometry of (alpha(2)epsilon(2))(4)-beta(8)-(gamma(1)delta(1))(8). It depends on [4Fe-4S] cluster as a cofactor. [Ni-4Fe-4S] cluster serves as cofactor.

It catalyses the reaction CO + 2 oxidized [2Fe-2S]-[ferredoxin] + H2O = 2 reduced [2Fe-2S]-[ferredoxin] + CO2 + 2 H(+). It functions in the pathway one-carbon metabolism; methanogenesis from acetate. Part of the ACDS complex that catalyzes the reversible cleavage of acetyl-CoA, allowing growth on acetate as sole source of carbon and energy. The alpha-epsilon subcomponent functions as a carbon monoxide dehydrogenase. The protein is Acetyl-CoA decarbonylase/synthase complex subunit alpha 1 of Methanosarcina acetivorans (strain ATCC 35395 / DSM 2834 / JCM 12185 / C2A).